The chain runs to 356 residues: Glutamine synthetase (356 aa).

A GS beta-grasp domain is found at 19–99 (IIAEYIWIGG…VMCDCYTPRG (81 aa)). A GS catalytic domain is found at 106 to 356 (KRYNAAKILS…IAQTTILWKP (251 aa)).

This sequence belongs to the glutamine synthetase family. In terms of assembly, homooctamer.

The protein resides in the cytoplasm. It catalyses the reaction L-glutamate + NH4(+) + ATP = L-glutamine + ADP + phosphate + H(+). This chain is Glutamine synthetase, found in Hordeum vulgare (Barley).